The chain runs to 853 residues: MFPFGQKGQKIKGTMVVMQKNVLDINSITSVGGIVDQGLGFIGSAVDALTFAATKISIQLISATKADGGKGKIGKSTNLRGKITLPTLGAGEQAYDVNFEWDSDFGIPGAFYIKNFMQNEFYLKSLILEDIPNHGTIHFVCNSWVYNSKNYKTDRIFFANNTYLPSETPAPLLKYREEELKNVRGDGTGERKEWDRIYDYDVYNDLGNPDSGDKYARPVLGGSALPYPRRERTGRGKTRKDPNSEKPSDFVYLPRDEAFGHLKSSDFLAYGIKSVSQDVLPVLTDAFDGNILSLEFDNFAEVHKLYEGGVTLPTNFLSKIAPIPVIKEIFRTDGEQFLKYPPPKVMQVDKSAWMTDEEFARETIAGLNPNVIKIIEEFPLSSKLDTQAYGDHTCIIAKEHLEPNLGGLTVEQAIQNKKLFILDHHDYLIPYLRKINANTTKTYATRTIFFLKDDGTLTPLAIELSKPHPQGEEYGPVSEVYVPASEGVEAYIWLLAKAYVVVNDACYHQIISHWLSTHAIVEPFVIATNRQLSVVHPIYKLLFPHYRDTMNINSLARKALVNADGIIEKTFLWGRYSMEMSAVIYKDWVFTDQALPNDLVKRGVAVKDPSAPHGVRLLIEDYPYASDGLEIWDAIKSWVQEYVSFYYKSDEELQKDPELQAWWKELVEVGHGDLKDKPWWQKMQTREELVEASAILIWIASALHAAVNFGQYPYGGLILNRPTISRRFMPEKGSPEYDALAKNPEKEFLKTITGKKETLIDLTVIEILSRHASDEFYLGQRDGGDYWTSDAGPLEAFKRFGKKLEEIEKKLIEKNKDETLRNRYGPAKMPYTLLYPSSEEGLTFRGIPNSISI.

The 126-residue stretch at 34-159 (IVDQGLGFIG…NYKTDRIFFA (126 aa)) folds into the PLAT domain. The Lipoxygenase domain occupies 162-853 (TYLPSETPAP…FRGIPNSISI (692 aa)). A disordered region spans residues 213–250 (DKYARPVLGGSALPYPRRERTGRGKTRKDPNSEKPSDF). The segment covering 228-250 (PRRERTGRGKTRKDPNSEKPSDF) has biased composition (basic and acidic residues). 5 residues coordinate Fe cation: H513, H518, H704, N708, and I853.

Belongs to the lipoxygenase family. As to quaternary structure, monomer. Requires Fe cation as cofactor. As to expression, found in maturing and developing seeds. In young seedlings it is found in cotyledons, hypocotyls, roots and primary leaves.

It localises to the cytoplasm. The catalysed reaction is (9Z,12Z)-octadecadienoate + O2 = (9S)-hydroperoxy-(10E,12Z)-octadecadienoate. It functions in the pathway lipid metabolism; oxylipin biosynthesis. Functionally, plant lipoxygenase may be involved in a number of diverse aspects of plant physiology including growth and development, pest resistance, and senescence or responses to wounding. It catalyzes the hydroperoxidation of lipids containing a cis,cis-1,4-pentadiene structure. In Glycine max (Soybean), this protein is Linoleate 9S-lipoxygenase-4 (LOX1.5).